We begin with the raw amino-acid sequence, 703 residues long: Polyribonucleotide nucleotidyltransferase (703 aa).

Residues D486 and D492 each coordinate Mg(2+). In terms of domain architecture, KH spans 554 to 613; it reads PKIITTNIDPEKIRDVIGPGGKMINKIIAETGVKIDIEEDGRVYILTPDSAAAQKALKII. One can recognise an S1 motif domain in the interval 623–691; the sequence is GEVYLGKVVR…KQGRINLSRK (69 aa).

The protein belongs to the polyribonucleotide nucleotidyltransferase family. Mg(2+) serves as cofactor.

The protein localises to the cytoplasm. It carries out the reaction RNA(n+1) + phosphate = RNA(n) + a ribonucleoside 5'-diphosphate. In terms of biological role, involved in mRNA degradation. Catalyzes the phosphorolysis of single-stranded polyribonucleotides processively in the 3'- to 5'-direction. The chain is Polyribonucleotide nucleotidyltransferase from Ruminiclostridium cellulolyticum (strain ATCC 35319 / DSM 5812 / JCM 6584 / H10) (Clostridium cellulolyticum).